Consider the following 159-residue polypeptide: Probable acetolactate synthase small subunit (159 aa).

One can recognise an ACT domain in the interval 4–78; sequence TIAVLVENKP…ETIKVSEITE (75 aa).

This sequence belongs to the acetolactate synthase small subunit family. As to quaternary structure, dimer of large and small chains.

It carries out the reaction 2 pyruvate + H(+) = (2S)-2-acetolactate + CO2. The protein operates within amino-acid biosynthesis; L-isoleucine biosynthesis; L-isoleucine from 2-oxobutanoate: step 1/4. Its pathway is amino-acid biosynthesis; L-valine biosynthesis; L-valine from pyruvate: step 1/4. The protein is Probable acetolactate synthase small subunit (ilvH) of Archaeoglobus fulgidus (strain ATCC 49558 / DSM 4304 / JCM 9628 / NBRC 100126 / VC-16).